The following is a 152-amino-acid chain: Transcriptional repressor NrdR (152 aa).

A zinc finger lies at 3-34 (CPFCGHADTQVVDSRVSEDGASIRRRRRCLEC). The 91-residue stretch at 49–139 (PQVVKQDGHR…VYRSFQDVAE (91 aa)) folds into the ATP-cone domain.

This sequence belongs to the NrdR family. Zn(2+) serves as cofactor.

Its function is as follows. Negatively regulates transcription of bacterial ribonucleotide reductase nrd genes and operons by binding to NrdR-boxes. The sequence is that of Transcriptional repressor NrdR from Laribacter hongkongensis (strain HLHK9).